Consider the following 382-residue polypeptide: MALISIRTSDDKIEIINQLLLPHVTEFVQIDTIEQAHDAIKTMKIRGAPAIASLAALSFSQYLSRALQASPLPEYFASPEALKNNLEPVLAYLFTARPTAVNLGAATRRLTTTLNQSIAQGKTTRSIAQDLIDEGKAIADEDVGRNKAMSKWGGDWLFDRVKAGGGSAEKGLNVLTVCNTGSLATSGYGTALGLITYLHETGKLEKAYYTQTAPYHQGSRLTALELKTLNIPSVMICDTMVGSLFQHFNIHAVVVGADRIAKNGDTANKIGTYNAAVIAARHNIPFIVVAPISTVDLAVESGLDIPIEQRPPIEACLVRGILYPNDGNSKQAQVMITPSGLDGIYNPSFDVTPAGLITAIVTEKGVAVKGEGENIFDLTPVV.

Aspartate 258 serves as the catalytic Proton donor.

This sequence belongs to the eIF-2B alpha/beta/delta subunits family. MtnA subfamily.

Its subcellular location is the cytoplasm. The protein localises to the nucleus. It carries out the reaction 5-(methylsulfanyl)-alpha-D-ribose 1-phosphate = 5-(methylsulfanyl)-D-ribulose 1-phosphate. The protein operates within amino-acid biosynthesis; L-methionine biosynthesis via salvage pathway; L-methionine from S-methyl-5-thio-alpha-D-ribose 1-phosphate: step 1/6. In terms of biological role, catalyzes the interconversion of methylthioribose-1-phosphate (MTR-1-P) into methylthioribulose-1-phosphate (MTRu-1-P). This Laccaria bicolor (strain S238N-H82 / ATCC MYA-4686) (Bicoloured deceiver) protein is Methylthioribose-1-phosphate isomerase.